The chain runs to 161 residues: Protein-export protein SecB (161 aa).

It belongs to the SecB family. Homotetramer, a dimer of dimers. One homotetramer interacts with 1 SecA dimer.

It is found in the cytoplasm. In terms of biological role, one of the proteins required for the normal export of preproteins out of the cell cytoplasm. It is a molecular chaperone that binds to a subset of precursor proteins, maintaining them in a translocation-competent state. It also specifically binds to its receptor SecA. This Pseudomonas putida (strain ATCC 700007 / DSM 6899 / JCM 31910 / BCRC 17059 / LMG 24140 / F1) protein is Protein-export protein SecB.